The chain runs to 240 residues: DNA repair protein RecO (240 aa).

It belongs to the RecO family.

Functionally, involved in DNA repair and RecF pathway recombination. The polypeptide is DNA repair protein RecO (Wolbachia pipientis wMel).